Consider the following 434-residue polypeptide: Pre-B-cell leukemia transcription factor 3 (434 aa).

Residues 20 to 41 (SVQGGMALPPPPHGHEGADGDG) are disordered. Residues 32-41 (HGHEGADGDG) are compositionally biased toward basic and acidic residues. One can recognise a PBC domain in the interval 41 to 234 (GRKQDIGDIL…VMILRSRFLD (194 aa)). Residues 48-127 (DILHQIMTIT…EGVSGPEKGG (80 aa)) form a PBC-A region. Residues 130 to 234 (AAAAAAAAAS…VMILRSRFLD (105 aa)) form a PBC-B region. A DNA-binding region (homeobox; TALE-type) is located at residues 235–297 (ARRKRRNFSK…NKRIRYKKNI (63 aa)). Over residues 326–341 (NQTNSPTTPNSGSSGS) the composition is skewed to low complexity. Disordered stretches follow at residues 326 to 349 (NQTN…NSGD) and 403 to 434 (LNAN…DTSN). The span at 403-422 (LNANGGWQDATTPSSVTSPT) shows a compositional bias: polar residues.

This sequence belongs to the TALE/PBX homeobox family. Interacts with PBXIP1. In terms of tissue distribution, ubiquitously expressed.

The protein resides in the nucleus. Transcriptional activator that binds the sequence 5'-ATCAATCAA-3'. The protein is Pre-B-cell leukemia transcription factor 3 (PBX3) of Homo sapiens (Human).